A 95-amino-acid polypeptide reads, in one-letter code: Small ribosomal subunit protein uS17 (95 aa).

This sequence belongs to the universal ribosomal protein uS17 family. In terms of assembly, part of the 30S ribosomal subunit.

Its function is as follows. One of the primary rRNA binding proteins, it binds specifically to the 5'-end of 16S ribosomal RNA. The protein is Small ribosomal subunit protein uS17 of Phytoplasma australiense.